An 855-amino-acid chain; its full sequence is Valine--tRNA ligase (855 aa).

Residues proline 44 to asparagine 54 carry the 'HIGH' region motif. Residues lysine 522–serine 526 carry the 'KMSKS' region motif. Residue lysine 525 coordinates ATP.

Belongs to the class-I aminoacyl-tRNA synthetase family. ValS type 2 subfamily.

Its subcellular location is the cytoplasm. The catalysed reaction is tRNA(Val) + L-valine + ATP = L-valyl-tRNA(Val) + AMP + diphosphate. In terms of biological role, catalyzes the attachment of valine to tRNA(Val). As ValRS can inadvertently accommodate and process structurally similar amino acids such as threonine, to avoid such errors, it has a 'posttransfer' editing activity that hydrolyzes mischarged Thr-tRNA(Val) in a tRNA-dependent manner. In Methanothrix thermoacetophila (strain DSM 6194 / JCM 14653 / NBRC 101360 / PT) (Methanosaeta thermophila), this protein is Valine--tRNA ligase.